The chain runs to 344 residues: Probable aldo-keto reductase 1 (344 aa).

The active-site Proton donor is the Tyr63. His130 is a binding site for substrate. 209–219 (SPLGLGFFAAG) provides a ligand contact to NADP(+).

It belongs to the aldo/keto reductase family.

The chain is Probable aldo-keto reductase 1 from Arabidopsis thaliana (Mouse-ear cress).